Here is an 849-residue protein sequence, read N- to C-terminus: Putative endoplasmic reticulum mannosidase MNL2 (849 aa).

At 1–12 (MSIARLVYSLFR) the chain is on the cytoplasmic side. Residues 13 to 32 (RVRSVLLLFITISLLFYYTF) form a helical; Signal-anchor for type II membrane protein membrane-spanning segment. Topologically, residues 33-849 (QNEIDILNSY…TQGGHIIKKK (817 aa)) are lumenal. The N-linked (GlcNAc...) asparagine glycan is linked to Asn45. A disordered region spans residues 56–79 (HNTEGSSKLDPPDLSSTGSDRIAT). Cys559 and Cys598 are oxidised to a cystine.

Belongs to the glycosyl hydrolase 47 family. Requires Ca(2+) as cofactor.

The protein localises to the endoplasmic reticulum membrane. It functions in the pathway protein modification; protein glycosylation. Putative mannosidase involved in glycoprotein quality control since it is involved in the targeting of misfolded glycoproteins for ER-associated protein degradation (ERAD). This chain is Putative endoplasmic reticulum mannosidase MNL2 (MNL2), found in Saccharomyces cerevisiae (strain ATCC 204508 / S288c) (Baker's yeast).